A 753-amino-acid polypeptide reads, in one-letter code: 5-methyltetrahydropteroyltriglutamate--homocysteine methyltransferase (753 aa).

Residues 17 to 20 (RELK) and Lys117 each bind 5-methyltetrahydropteroyltri-L-glutamate. Residues 431-433 (IGS) and Glu484 each bind L-homocysteine. L-methionine is bound by residues 431–433 (IGS) and Glu484. 5-methyltetrahydropteroyltri-L-glutamate contacts are provided by residues 515–516 (RC) and Trp561. Residue Asp599 coordinates L-homocysteine. L-methionine is bound at residue Asp599. Position 605 (Glu605) interacts with 5-methyltetrahydropteroyltri-L-glutamate. Zn(2+) is bound by residues His641, Cys643, and Glu665. The active-site Proton donor is His694. Zn(2+) is bound at residue Cys726.

This sequence belongs to the vitamin-B12 independent methionine synthase family. It depends on Zn(2+) as a cofactor.

It catalyses the reaction 5-methyltetrahydropteroyltri-L-glutamate + L-homocysteine = tetrahydropteroyltri-L-glutamate + L-methionine. It participates in amino-acid biosynthesis; L-methionine biosynthesis via de novo pathway; L-methionine from L-homocysteine (MetE route): step 1/1. Catalyzes the transfer of a methyl group from 5-methyltetrahydrofolate to homocysteine resulting in methionine formation. The sequence is that of 5-methyltetrahydropteroyltriglutamate--homocysteine methyltransferase from Shigella sonnei (strain Ss046).